A 319-amino-acid polypeptide reads, in one-letter code: Malate dehydrogenase (319 aa).

Residues 10 to 15 (GAGNIG) and aspartate 34 each bind NAD(+). 2 residues coordinate substrate: arginine 83 and arginine 89. Residues asparagine 96 and 119 to 121 (ITN) each bind NAD(+). The substrate site is built by asparagine 121 and arginine 152. Histidine 176 serves as the catalytic Proton acceptor.

The protein belongs to the LDH/MDH superfamily. MDH type 3 family.

It catalyses the reaction (S)-malate + NAD(+) = oxaloacetate + NADH + H(+). Its function is as follows. Catalyzes the reversible oxidation of malate to oxaloacetate. This chain is Malate dehydrogenase, found in Francisella tularensis subsp. tularensis (strain FSC 198).